We begin with the raw amino-acid sequence, 155 residues long: Small ribosomal subunit protein uS9 (155 aa).

The protein belongs to the universal ribosomal protein uS9 family.

In Rhizobium etli (strain ATCC 51251 / DSM 11541 / JCM 21823 / NBRC 15573 / CFN 42), this protein is Small ribosomal subunit protein uS9.